Consider the following 344-residue polypeptide: Protein PopA1 (344 aa).

Disordered regions lie at residues 1-28 (MSVG…NSQQ), 58-108 (SAGG…DANN), 134-156 (QPGG…AGGQ), 211-242 (GNGV…EDQG), and 268-311 (GGGN…NLQS). Low complexity-rich tracts occupy residues 8–28 (SPSN…NSQQ) and 65–83 (NTGN…ANDP). Residues 89–108 (SKSQGPQSANKTGNVDDANN) show a composition bias toward polar residues. Gly residues predominate over residues 138-156 (NDKGNGVGGANGAKGAGGQ). The span at 215–235 (NGNQANGPQNAGDVNGANGAD) shows a compositional bias: low complexity. Positions 268-279 (GGGNQAQGGSKG) are enriched in gly residues. Over residues 280-294 (AGNASPASGANPGAN) the composition is skewed to low complexity. The segment covering 295–311 (QPGSADDQSSGQNNLQS) has biased composition (polar residues).

In terms of processing, popA2 and PopA3 are produced from PopA1.

The protein resides in the secreted. In terms of biological role, acts as a specific hypersensitive response (HR) elicitor. Has activity on tobacco (non-host plant) and petunia but is without activity on tomato (host plant); PopA3 seems to be more active than a PopA1-PopA2 mixture. This chain is Protein PopA1 (popA), found in Ralstonia nicotianae (strain ATCC BAA-1114 / GMI1000) (Ralstonia solanacearum).